The following is a 334-amino-acid chain: Ornithine carbamoyltransferase, catabolic (334 aa).

Residues 57–60 (STRT), Q84, R108, and 135–138 (HPTQ) contribute to the carbamoyl phosphate site. Residues N168, D232, and 236–237 (SM) each bind L-ornithine. Residues 274 to 275 (CL) and R320 each bind carbamoyl phosphate.

Belongs to the aspartate/ornithine carbamoyltransferase superfamily. OTCase family.

The protein resides in the cytoplasm. The enzyme catalyses carbamoyl phosphate + L-ornithine = L-citrulline + phosphate + H(+). It participates in amino-acid degradation; L-arginine degradation via ADI pathway; carbamoyl phosphate from L-arginine: step 2/2. In terms of biological role, reversibly catalyzes the transfer of the carbamoyl group from carbamoyl phosphate (CP) to the N(epsilon) atom of ornithine (ORN) to produce L-citrulline. In Rhizobium meliloti (strain 1021) (Ensifer meliloti), this protein is Ornithine carbamoyltransferase, catabolic (arcB).